Reading from the N-terminus, the 755-residue chain is Polyribonucleotide nucleotidyltransferase (755 aa).

D527 and D533 together coordinate Mg(2+). The region spanning 593-652 (PRITTIKVPVDKIGEVIGPKGKMINSITEETGANISIEDDGTVFVGAADGASAQAAIDKI) is the KH domain. Residues 664–733 (GERFLGTVVK…NRGKISLVPV (70 aa)) form the S1 motif domain. The disordered stretch occupies residues 734 to 755 (GEEDAAEAPAPAEAQPADAVTQ). Positions 740 to 755 (EAPAPAEAQPADAVTQ) are enriched in low complexity.

Belongs to the polyribonucleotide nucleotidyltransferase family. It depends on Mg(2+) as a cofactor.

The protein localises to the cytoplasm. The catalysed reaction is RNA(n+1) + phosphate = RNA(n) + a ribonucleoside 5'-diphosphate. Functionally, involved in mRNA degradation. Catalyzes the phosphorolysis of single-stranded polyribonucleotides processively in the 3'- to 5'-direction. This Mycobacteroides abscessus (strain ATCC 19977 / DSM 44196 / CCUG 20993 / CIP 104536 / JCM 13569 / NCTC 13031 / TMC 1543 / L948) (Mycobacterium abscessus) protein is Polyribonucleotide nucleotidyltransferase.